Here is a 222-residue protein sequence, read N- to C-terminus: L-cystine transport system permease protein TcyL (222 aa).

Residues 1–22 (MQESIQLVIDSLPFLLKGAGYT) are Periplasmic-facing. The region spanning 19 to 207 (AGYTLQLSIG…IMATVLSTLQ (189 aa)) is the ABC transmembrane type-1 domain. Residues 23-43 (LQLSIGGMFFGLLLGFILALM) form a helical membrane-spanning segment. Residues 44–64 (RLSPIWPVRWLARFYISIFRG) are Cytoplasmic-facing. The helical transmembrane segment at 65–85 (TPLIAQLFMIYYGLPQFGIEL) threads the bilayer. The Periplasmic segment spans residues 86–182 (DPIPSAMIGL…RQAQLITSRT (97 aa)). The helical transmembrane segment at 183 to 203 (LEVFTMYLAASLIYWIMATVL) threads the bilayer. Topologically, residues 204–222 (STLQNHFENQLNRQEREPK) are cytoplasmic.

Belongs to the binding-protein-dependent transport system permease family. HisMQ subfamily. As to quaternary structure, the complex is composed of two ATP-binding proteins (TcyN), two transmembrane proteins (TcyL) and a solute-binding protein (TcyJ).

Its subcellular location is the cell inner membrane. Part of the ABC transporter complex TcyJLN involved in L-cystine import. Responsible for the translocation of the substrate across the membrane. The protein is L-cystine transport system permease protein TcyL of Escherichia coli O6:H1 (strain CFT073 / ATCC 700928 / UPEC).